The sequence spans 144 residues: ATP synthase epsilon chain (144 aa).

This sequence belongs to the ATPase epsilon chain family. F-type ATPases have 2 components, CF(1) - the catalytic core - and CF(0) - the membrane proton channel. CF(1) has five subunits: alpha(3), beta(3), gamma(1), delta(1), epsilon(1). CF(0) has three main subunits: a, b and c.

The protein resides in the cell inner membrane. In terms of biological role, produces ATP from ADP in the presence of a proton gradient across the membrane. The protein is ATP synthase epsilon chain of Hydrogenovibrio crunogenus (strain DSM 25203 / XCL-2) (Thiomicrospira crunogena).